A 354-amino-acid chain; its full sequence is GDSL esterase/lipase At3g09930 (354 aa).

Residues 1–24 form the signal peptide; it reads MELPKLLISLFLFSFSSFFLGAES. Serine 46 (nucleophile) is an active-site residue. Residues asparagine 133, asparagine 233, asparagine 237, asparagine 256, and asparagine 300 are each glycosylated (N-linked (GlcNAc...) asparagine). Residues aspartate 329 and histidine 332 contribute to the active site.

This sequence belongs to the 'GDSL' lipolytic enzyme family.

It localises to the secreted. The sequence is that of GDSL esterase/lipase At3g09930 from Arabidopsis thaliana (Mouse-ear cress).